The primary structure comprises 518 residues: Zinc finger protein 776 (518 aa).

Positions 14–89 (VTFEDVAVNF…HWTGVCTKKV (76 aa)) constitute a KRAB domain. Residues Lys171, Lys196, Lys220, and Lys247 each participate in a glycyl lysine isopeptide (Lys-Gly) (interchain with G-Cter in SUMO2) cross-link. The segment at 208 to 230 (YICGESTIPFSNKHSLVLHQRLL) adopts a C2H2-type 1; degenerate zinc-finger fold. The segment at 236–258 (YVCSDSGKFTSKSNSFNNHQGVR) adopts a C2H2-type 2; degenerate zinc-finger fold. 7 C2H2-type zinc fingers span residues 264–286 (YQCG…QRVH), 292–314 (YECG…QRVH), 320–342 (YECD…QRVH), 348–370 (YQCG…QRVH), 376–398 (FECT…QRVH), 404–426 (YECK…QRVH), and 432–454 (YECR…QQIH). The C2H2-type 10; degenerate zinc-finger motif lies at 460–482 (HECGECGKCFHQKGSLIRHQQIH). Residues 488–510 (HECGECGKCFRQKGNLIKHQRVH) form a C2H2-type 11 zinc finger.

The protein belongs to the krueppel C2H2-type zinc-finger protein family.

It is found in the nucleus. Its function is as follows. May be involved in transcriptional regulation. The protein is Zinc finger protein 776 (ZNF776) of Homo sapiens (Human).